Consider the following 726-residue polypeptide: Methionine--tRNA ligase (726 aa).

Positions 12–22 match the 'HIGH' region motif; sequence PYVNNIPHLGN. The Zn(2+) site is built by cysteine 143, cysteine 146, cysteine 155, and cysteine 158. The short motif at 330–334 is the 'KMSKS' region element; the sequence is KFSKS. Lysine 333 contacts ATP. Positions 562-667 constitute a tRNA-binding domain; it reads FSEQICLKTV…DNPIPGERVI (106 aa).

This sequence belongs to the class-I aminoacyl-tRNA synthetase family. MetG type 1 subfamily. In terms of assembly, homodimer. It depends on Zn(2+) as a cofactor.

Its subcellular location is the cytoplasm. The enzyme catalyses tRNA(Met) + L-methionine + ATP = L-methionyl-tRNA(Met) + AMP + diphosphate. Its function is as follows. Is required not only for elongation of protein synthesis but also for the initiation of all mRNA translation through initiator tRNA(fMet) aminoacylation. This chain is Methionine--tRNA ligase, found in Borrelia recurrentis (strain A1).